A 297-amino-acid polypeptide reads, in one-letter code: N-acetylmuramic acid 6-phosphate etherase (297 aa).

The SIS domain occupies 55–218 (AAAALKSGGR…STGAMVKFGK (164 aa)). The Proton donor role is filled by Glu-83. Residue Glu-114 is part of the active site.

Belongs to the GCKR-like family. MurNAc-6-P etherase subfamily. As to quaternary structure, homodimer.

The enzyme catalyses N-acetyl-D-muramate 6-phosphate + H2O = N-acetyl-D-glucosamine 6-phosphate + (R)-lactate. The protein operates within amino-sugar metabolism; 1,6-anhydro-N-acetylmuramate degradation. It participates in amino-sugar metabolism; N-acetylmuramate degradation. Its pathway is cell wall biogenesis; peptidoglycan recycling. In terms of biological role, specifically catalyzes the cleavage of the D-lactyl ether substituent of MurNAc 6-phosphate, producing GlcNAc 6-phosphate and D-lactate. Together with AnmK, is also required for the utilization of anhydro-N-acetylmuramic acid (anhMurNAc) either imported from the medium or derived from its own cell wall murein, and thus plays a role in cell wall recycling. The protein is N-acetylmuramic acid 6-phosphate etherase of Salmonella typhi.